Here is a 98-residue protein sequence, read N- to C-terminus: Large ribosomal subunit protein bL28 (98 aa).

Belongs to the bacterial ribosomal protein bL28 family.

The chain is Large ribosomal subunit protein bL28 from Beijerinckia indica subsp. indica (strain ATCC 9039 / DSM 1715 / NCIMB 8712).